The chain runs to 467 residues: Chromosomal replication initiator protein DnaA (467 aa).

A domain I, interacts with DnaA modulators region spans residues 1–90 (MSLSLWQQCL…KSVTQTPQAA (90 aa)). Positions 91–130 (VTSNVAAPAQVAQTQPQRAAPSTRSGWDNVPAPAEPTYRS) are domain II. Positions 97 to 111 (APAQVAQTQPQRAAP) are enriched in low complexity. A disordered region spans residues 97 to 119 (APAQVAQTQPQRAAPSTRSGWDN). The domain III, AAA+ region stretch occupies residues 131-347 (NVNVKHTFDN…GALNRVIANA (217 aa)). ATP is bound by residues Gly175, Gly177, Lys178, and Thr179. The interval 348-467 (NFTGRAITID…FSNLIRTLSS (120 aa)) is domain IV, binds dsDNA.

Belongs to the DnaA family. In terms of assembly, oligomerizes as a right-handed, spiral filament on DNA at oriC.

The protein localises to the cytoplasm. Its function is as follows. Plays an essential role in the initiation and regulation of chromosomal replication. ATP-DnaA binds to the origin of replication (oriC) to initiate formation of the DNA replication initiation complex once per cell cycle. Binds the DnaA box (a 9 base pair repeat at the origin) and separates the double-stranded (ds)DNA. Forms a right-handed helical filament on oriC DNA; dsDNA binds to the exterior of the filament while single-stranded (ss)DNA is stabiized in the filament's interior. The ATP-DnaA-oriC complex binds and stabilizes one strand of the AT-rich DNA unwinding element (DUE), permitting loading of DNA polymerase. After initiation quickly degrades to an ADP-DnaA complex that is not apt for DNA replication. Binds acidic phospholipids. The polypeptide is Chromosomal replication initiator protein DnaA (Escherichia coli O157:H7).